Here is a 148-residue protein sequence, read N- to C-terminus: SsrA-binding protein (148 aa).

The disordered stretch occupies residues 129–148 (ETEKDRDWQREKARLMREKA).

Belongs to the SmpB family.

It localises to the cytoplasm. Required for rescue of stalled ribosomes mediated by trans-translation. Binds to transfer-messenger RNA (tmRNA), required for stable association of tmRNA with ribosomes. tmRNA and SmpB together mimic tRNA shape, replacing the anticodon stem-loop with SmpB. tmRNA is encoded by the ssrA gene; the 2 termini fold to resemble tRNA(Ala) and it encodes a 'tag peptide', a short internal open reading frame. During trans-translation Ala-aminoacylated tmRNA acts like a tRNA, entering the A-site of stalled ribosomes, displacing the stalled mRNA. The ribosome then switches to translate the ORF on the tmRNA; the nascent peptide is terminated with the 'tag peptide' encoded by the tmRNA and targeted for degradation. The ribosome is freed to recommence translation, which seems to be the essential function of trans-translation. This is SsrA-binding protein from Ralstonia nicotianae (strain ATCC BAA-1114 / GMI1000) (Ralstonia solanacearum).